Reading from the N-terminus, the 561-residue chain is Arginine--tRNA ligase (561 aa).

Residues 135–145 carry the 'HIGH' region motif; sequence ANPTGLLHMGN.

Belongs to the class-I aminoacyl-tRNA synthetase family. Monomer.

It localises to the cytoplasm. The catalysed reaction is tRNA(Arg) + L-arginine + ATP = L-arginyl-tRNA(Arg) + AMP + diphosphate. The protein is Arginine--tRNA ligase of Desulfitobacterium hafniense (strain DSM 10664 / DCB-2).